A 253-amino-acid polypeptide reads, in one-letter code: Sulfate transporter CysZ (253 aa).

Transmembrane regions (helical) follow at residues 31–51 (FVIL…WWLF), 72–92 (LSYI…GYFF), 151–171 (IVLL…PVLW), and 222–242 (IPVL…AMWV).

This sequence belongs to the CysZ family.

It localises to the cell inner membrane. In terms of biological role, high affinity, high specificity proton-dependent sulfate transporter, which mediates sulfate uptake. Provides the sulfur source for the cysteine synthesis pathway. This chain is Sulfate transporter CysZ, found in Escherichia fergusonii (strain ATCC 35469 / DSM 13698 / CCUG 18766 / IAM 14443 / JCM 21226 / LMG 7866 / NBRC 102419 / NCTC 12128 / CDC 0568-73).